A 246-amino-acid chain; its full sequence is 33kDa venom protein (246 aa).

A signal peptide spans 1 to 20 (MAGKEVIFIMALFIAVESSP). A run of 7 repeats spans residues 83-96 (GGAV…KRET), 97-110 (AESL…EKAS), 111-124 (AENL…QKSS), 125-138 (VDEK…QKGA), 139-152 (VEGQ…RRET), 153-166 (AESQ…EKAS), and 167-180 (AENL…QKVT). The tract at residues 83-243 (GGAVSESVKQ…SGSVGNDDDI (161 aa)) is 12 X approximate tandem repeats of [AV][DE]X[VL]SGSX[DE]QX[KR]X[ST]. The interval 88–246 (ESVKQKRETA…VGNDDDISVQ (159 aa)) is disordered. Polar residues predominate over residues 112–123 (ENLSGSFDQQKS). Basic and acidic residues predominate over residues 175 to 186 (DKQKVTVEEKSE). One copy of the 8; half-length repeat lies at 181–187 (VEEKSEP). Repeat copies occupy residues 188 to 201 (AQGQ…KRKT), 202 to 215 (TENV…EKAS), 216 to 229 (AESL…QKSS), and 230 to 243 (VDEK…DDDI). The span at 217 to 228 (ESLSGSFDQQKS) shows a compositional bias: polar residues.

Expressed by the venom gland.

Its subcellular location is the secreted. The sequence is that of 33kDa venom protein from Chelonus sp. nr. curvimaculatus (Parasitic wasp).